A 319-amino-acid chain; its full sequence is HTH-type transcriptional regulator YidZ (319 aa).

Positions 8–65 (LDLNLLLCLQLLMQERSVTKAAKRMNVTPSAVSKSLSKLRTWFDDPLFVNTPLGLTPT) constitute an HTH lysR-type domain. The segment at residues 25 to 44 (VTKAAKRMNVTPSAVSKSLS) is a DNA-binding region (H-T-H motif).

The protein belongs to the LysR transcriptional regulatory family.

Functionally, involved in anaerobic NO protection. This is HTH-type transcriptional regulator YidZ from Citrobacter koseri (strain ATCC BAA-895 / CDC 4225-83 / SGSC4696).